A 330-amino-acid chain; its full sequence is Ketol-acid reductoisomerase (NADP(+)) (330 aa).

A KARI N-terminal Rossmann domain is found at 2–182 (ARMYYDADAN…GGTRAGILET (181 aa)). Residues 25-28 (YGSQ), Ser51, Ser53, and 83-86 (DEFQ) each bind NADP(+). The active site involves His108. Residue Gly134 coordinates NADP(+). In terms of domain architecture, KARI C-terminal knotted spans 183 to 328 (SFREETETDL…KDLRAMFSWL (146 aa)). Mg(2+) is bound by residues Asp191, Glu195, Glu227, and Glu231. Position 252 (Ser252) interacts with substrate.

It belongs to the ketol-acid reductoisomerase family. Mg(2+) is required as a cofactor.

The enzyme catalyses (2R)-2,3-dihydroxy-3-methylbutanoate + NADP(+) = (2S)-2-acetolactate + NADPH + H(+). It carries out the reaction (2R,3R)-2,3-dihydroxy-3-methylpentanoate + NADP(+) = (S)-2-ethyl-2-hydroxy-3-oxobutanoate + NADPH + H(+). The protein operates within amino-acid biosynthesis; L-isoleucine biosynthesis; L-isoleucine from 2-oxobutanoate: step 2/4. It participates in amino-acid biosynthesis; L-valine biosynthesis; L-valine from pyruvate: step 2/4. Functionally, involved in the biosynthesis of branched-chain amino acids (BCAA). Catalyzes an alkyl-migration followed by a ketol-acid reduction of (S)-2-acetolactate (S2AL) to yield (R)-2,3-dihydroxy-isovalerate. In the isomerase reaction, S2AL is rearranged via a Mg-dependent methyl migration to produce 3-hydroxy-3-methyl-2-ketobutyrate (HMKB). In the reductase reaction, this 2-ketoacid undergoes a metal-dependent reduction by NADPH to yield (R)-2,3-dihydroxy-isovalerate. In Synechococcus sp. (strain ATCC 27144 / PCC 6301 / SAUG 1402/1) (Anacystis nidulans), this protein is Ketol-acid reductoisomerase (NADP(+)).